A 352-amino-acid chain; its full sequence is Protein RecA (352 aa).

ATP is bound at residue 67-74 (GPESSGKT).

Belongs to the RecA family.

It is found in the cytoplasm. Functionally, can catalyze the hydrolysis of ATP in the presence of single-stranded DNA, the ATP-dependent uptake of single-stranded DNA by duplex DNA, and the ATP-dependent hybridization of homologous single-stranded DNAs. It interacts with LexA causing its activation and leading to its autocatalytic cleavage. This Chlamydia trachomatis serovar D (strain ATCC VR-885 / DSM 19411 / UW-3/Cx) protein is Protein RecA.